The following is a 377-amino-acid chain: Succinyl-diaminopimelate desuccinylase (377 aa).

A Zn(2+)-binding site is contributed by His66. The active site involves Asp68. Residue Asp99 coordinates Zn(2+). The active-site Proton acceptor is Glu133. The Zn(2+) site is built by Glu134, Glu162, and His348.

This sequence belongs to the peptidase M20A family. DapE subfamily. In terms of assembly, homodimer. The cofactor is Zn(2+). Co(2+) serves as cofactor.

It catalyses the reaction N-succinyl-(2S,6S)-2,6-diaminopimelate + H2O = (2S,6S)-2,6-diaminopimelate + succinate. It functions in the pathway amino-acid biosynthesis; L-lysine biosynthesis via DAP pathway; LL-2,6-diaminopimelate from (S)-tetrahydrodipicolinate (succinylase route): step 3/3. Catalyzes the hydrolysis of N-succinyl-L,L-diaminopimelic acid (SDAP), forming succinate and LL-2,6-diaminopimelate (DAP), an intermediate involved in the bacterial biosynthesis of lysine and meso-diaminopimelic acid, an essential component of bacterial cell walls. This Marinomonas sp. (strain MWYL1) protein is Succinyl-diaminopimelate desuccinylase.